The chain runs to 451 residues: F-box only protein 47 (451 aa).

The region spanning 41–91 (LGNFKVLPLEILHIILRYLSVKDIGMLSMVSKTVSQHIINYISTSSGSRRL) is the F-box domain.

In terms of assembly, part of a SCF (SKP1-cullin-F-box) protein ligase complex.

Functionally, probably recognizes and binds to some phosphorylated proteins and promotes their ubiquitination and degradation. The polypeptide is F-box only protein 47 (Fbxo47) (Mus musculus (Mouse)).